We begin with the raw amino-acid sequence, 635 residues long: Phosphatidylserine decarboxylase proenzyme 2 (635 aa).

The C2 domain occupies 20–146; the sequence is KLQKFRIHRR…VVQEPESTCK (127 aa). 2 EF-hand domains span residues 174 to 209 and 210 to 245; these read TERR…FGNL and VAAN…QQEQ. Residues Asp187, Asn189, Asp191, Gln193, Glu198, Asp223, Asn225, Asp227, and Glu234 each coordinate Ca(2+). Active-site charge relay system; for autoendoproteolytic cleavage activity residues include Asp443, His499, and Ser587. Residue Ser587 is the Schiff-base intermediate with substrate; via pyruvic acid; for decarboxylase activity of the active site. Residue Ser587 is modified to Pyruvic acid (Ser); by autocatalysis.

The protein belongs to the phosphatidylserine decarboxylase family. PSD-B subfamily. Eukaryotic type II sub-subfamily. In terms of assembly, heterodimer of a large membrane-associated beta subunit and a small pyruvoyl-containing alpha subunit. It depends on pyruvate as a cofactor. Is synthesized initially as an inactive proenzyme. Formation of the active enzyme involves a self-maturation process in which the active site pyruvoyl group is generated from an internal serine residue via an autocatalytic post-translational modification. Two non-identical subunits are generated from the proenzyme in this reaction, and the pyruvate is formed at the N-terminus of the alpha chain, which is derived from the carboxyl end of the proenzyme. The autoendoproteolytic cleavage occurs by a canonical serine protease mechanism, in which the side chain hydroxyl group of the serine supplies its oxygen atom to form the C-terminus of the beta chain, while the remainder of the serine residue undergoes an oxidative deamination to produce ammonia and the pyruvoyl prosthetic group on the alpha chain. During this reaction, the Ser that is part of the protease active site of the proenzyme becomes the pyruvoyl prosthetic group, which constitutes an essential element of the active site of the mature decarboxylase. Highly expressed in flowers and at lower levels in leaves.

The protein resides in the vacuole membrane. It carries out the reaction a 1,2-diacyl-sn-glycero-3-phospho-L-serine + H(+) = a 1,2-diacyl-sn-glycero-3-phosphoethanolamine + CO2. It participates in phospholipid metabolism; phosphatidylethanolamine biosynthesis; phosphatidylethanolamine from CDP-diacylglycerol: step 2/2. Catalyzes the formation of phosphatidylethanolamine (PtdEtn) from phosphatidylserine (PtdSer). Plays a central role in phospholipid metabolism and in the interorganelle trafficking of phosphatidylserine. Contributes only to a minor proportion of PtdEtn production. The polypeptide is Phosphatidylserine decarboxylase proenzyme 2 (PSD2) (Arabidopsis thaliana (Mouse-ear cress)).